We begin with the raw amino-acid sequence, 590 residues long: Phosphomethylpyrimidine synthase (590 aa).

Substrate is bound by residues Asn197, Met226, Tyr255, His291, 311–313, 352–355, and Glu391; these read SRG and DGLR. Position 395 (His395) interacts with Zn(2+). Position 418 (Tyr418) interacts with substrate. His459 is a Zn(2+) binding site. Residues Cys539, Cys542, and Cys547 each coordinate [4Fe-4S] cluster.

The protein belongs to the ThiC family. The cofactor is [4Fe-4S] cluster.

It catalyses the reaction 5-amino-1-(5-phospho-beta-D-ribosyl)imidazole + S-adenosyl-L-methionine = 4-amino-2-methyl-5-(phosphooxymethyl)pyrimidine + CO + 5'-deoxyadenosine + formate + L-methionine + 3 H(+). It functions in the pathway cofactor biosynthesis; thiamine diphosphate biosynthesis. Catalyzes the synthesis of the hydroxymethylpyrimidine phosphate (HMP-P) moiety of thiamine from aminoimidazole ribotide (AIR) in a radical S-adenosyl-L-methionine (SAM)-dependent reaction. The protein is Phosphomethylpyrimidine synthase of Bacillus subtilis (strain 168).